Reading from the N-terminus, the 51-residue chain is uncharacterized protein (51 aa).

The protein to E.coli YdaF.

This is an uncharacterized protein from Escherichia coli O157:H7.